A 227-amino-acid polypeptide reads, in one-letter code: Cytochrome c oxidase subunit 2 (227 aa).

Residues 1–14 are Mitochondrial intermembrane-facing; the sequence is MAYPFQLGLQDATS. The helical transmembrane segment at 15 to 45 threads the bilayer; it reads PIMEELTNFHDHTLMIVFLISSLVLYIISLM. At 46–59 the chain is on the mitochondrial matrix side; the sequence is LTTKLTHTNTMDAQ. Residues 60–87 form a helical membrane-spanning segment; that stretch reads EVETIWTILPAVILILIALPSLRILYMM. The Mitochondrial intermembrane segment spans residues 88 to 227; the sequence is DEINNPALTV…HFENWSASMI (140 aa). The Cu cation site is built by His-161, Cys-196, Glu-198, Cys-200, His-204, and Met-207. Glu-198 contributes to the Mg(2+) binding site.

The protein belongs to the cytochrome c oxidase subunit 2 family. In terms of assembly, component of the cytochrome c oxidase (complex IV, CIV), a multisubunit enzyme composed of 14 subunits. The complex is composed of a catalytic core of 3 subunits MT-CO1, MT-CO2 and MT-CO3, encoded in the mitochondrial DNA, and 11 supernumerary subunits COX4I, COX5A, COX5B, COX6A, COX6B, COX6C, COX7A, COX7B, COX7C, COX8 and NDUFA4, which are encoded in the nuclear genome. The complex exists as a monomer or a dimer and forms supercomplexes (SCs) in the inner mitochondrial membrane with NADH-ubiquinone oxidoreductase (complex I, CI) and ubiquinol-cytochrome c oxidoreductase (cytochrome b-c1 complex, complex III, CIII), resulting in different assemblies (supercomplex SCI(1)III(2)IV(1) and megacomplex MCI(2)III(2)IV(2)). Found in a complex with TMEM177, COA6, COX18, COX20, SCO1 and SCO2. Interacts with TMEM177 in a COX20-dependent manner. Interacts with COX20. Interacts with COX16. Cu cation serves as cofactor.

Its subcellular location is the mitochondrion inner membrane. It carries out the reaction 4 Fe(II)-[cytochrome c] + O2 + 8 H(+)(in) = 4 Fe(III)-[cytochrome c] + 2 H2O + 4 H(+)(out). Component of the cytochrome c oxidase, the last enzyme in the mitochondrial electron transport chain which drives oxidative phosphorylation. The respiratory chain contains 3 multisubunit complexes succinate dehydrogenase (complex II, CII), ubiquinol-cytochrome c oxidoreductase (cytochrome b-c1 complex, complex III, CIII) and cytochrome c oxidase (complex IV, CIV), that cooperate to transfer electrons derived from NADH and succinate to molecular oxygen, creating an electrochemical gradient over the inner membrane that drives transmembrane transport and the ATP synthase. Cytochrome c oxidase is the component of the respiratory chain that catalyzes the reduction of oxygen to water. Electrons originating from reduced cytochrome c in the intermembrane space (IMS) are transferred via the dinuclear copper A center (CU(A)) of subunit 2 and heme A of subunit 1 to the active site in subunit 1, a binuclear center (BNC) formed by heme A3 and copper B (CU(B)). The BNC reduces molecular oxygen to 2 water molecules using 4 electrons from cytochrome c in the IMS and 4 protons from the mitochondrial matrix. The chain is Cytochrome c oxidase subunit 2 (MT-CO2) from Sundamys muelleri (Mueller's giant sunda rat).